The primary structure comprises 233 residues: Nickel import system ATP-binding protein NikE (233 aa).

The ABC transporter domain maps to 2 to 228 (IELKHVTFGY…DRHPYTKELV (227 aa)). 35–42 (GESGCGKS) lines the ATP pocket.

It belongs to the ABC transporter superfamily. In terms of assembly, the complex is composed of two ATP-binding proteins (NikD and NikE), two transmembrane proteins (NikB and NikC) and a solute-binding protein (NikA).

Its subcellular location is the cell membrane. The catalysed reaction is Ni(2+)(out) + ATP + H2O = Ni(2+)(in) + ADP + phosphate + H(+). Functionally, part of the ABC transporter complex NikABCDE (Opp2) involved in nickel import. Probably responsible for energy coupling to the transport system. The sequence is that of Nickel import system ATP-binding protein NikE from Staphylococcus aureus (strain USA300).